The sequence spans 182 residues: Oligoribonuclease (182 aa).

The Exonuclease domain occupies 8 to 171 (LIWLDMEMTG…ADIHESIGEL (164 aa)). Tyrosine 129 is an active-site residue.

This sequence belongs to the oligoribonuclease family.

It localises to the cytoplasm. Functionally, 3'-to-5' exoribonuclease specific for small oligoribonucleotides. The chain is Oligoribonuclease from Azoarcus sp. (strain BH72).